Reading from the N-terminus, the 261-residue chain is 5-oxoprolinase subunit A (261 aa).

It belongs to the LamB/PxpA family. Forms a complex composed of PxpA, PxpB and PxpC.

The enzyme catalyses 5-oxo-L-proline + ATP + 2 H2O = L-glutamate + ADP + phosphate + H(+). Its function is as follows. Catalyzes the cleavage of 5-oxoproline to form L-glutamate coupled to the hydrolysis of ATP to ADP and inorganic phosphate. This Symbiobacterium thermophilum (strain DSM 24528 / JCM 14929 / IAM 14863 / T) protein is 5-oxoprolinase subunit A.